Consider the following 1366-residue polypeptide: Protein HUA2-LIKE 2 (1366 aa).

In terms of domain architecture, PWWP spans Val24–Glu81. Residues Leu111 to Glu124 are compositionally biased toward basic and acidic residues. Disordered regions lie at residues Leu111–Pro138, Thr203–Lys319, Asn384–Asn403, Glu427–Ser451, and Ser787–Lys808. The segment covering Val213–Gly252 has biased composition (polar residues). Over residues Ser391–Asn403 the composition is skewed to basic and acidic residues. Residues Ser787–Ile803 show a composition bias toward polar residues. The region spanning Asp836–Ser977 is the CID domain. Disordered regions lie at residues Leu1027–Arg1076 and Thr1128–Asp1366. Residues Gly1032–Asp1052 are compositionally biased toward acidic residues. The segment covering Thr1057–Glu1066 has biased composition (basic and acidic residues). Residues Pro1138–Pro1152 are compositionally biased toward pro residues. The segment covering Leu1191–Phe1223 has biased composition (polar residues). Residues Pro1229 to Gln1244 are compositionally biased toward pro residues. Composition is skewed to basic and acidic residues over residues Glu1251 to Ala1262 and Cys1275 to Trp1298. Low complexity predominate over residues Arg1299–Arg1309.

Expressed throughout young primordia, and vegetative and reproductive apices.

The protein localises to the nucleus. In terms of biological role, probable transcription factor that acts with partial redundancy with HULK1 and HULK3. Plays diverse and essential roles in the control of plant development, physiology and flowering time. This is Protein HUA2-LIKE 2 from Arabidopsis thaliana (Mouse-ear cress).